Here is a 468-residue protein sequence, read N- to C-terminus: uncharacterized protein (468 aa).

An N-terminal signal peptide occupies residues 1–19 (MRVLSVLLVALTVAGSAYS). N-linked (GlcNAc...) asparagine glycans are attached at residues asparagine 86 and asparagine 334. Residues 401 to 421 (NPSTNLPETSPPTEQPTAPPA) form a disordered region. Pro residues predominate over residues 409–421 (TSPPTEQPTAPPA). Asparagine 435 carries an N-linked (GlcNAc...) asparagine glycan. The GPI-like-anchor amidated asparagine moiety is linked to residue asparagine 444. Residues 445 to 468 (SASSIEMSKLVVAILSLFILAFFH) constitute a propeptide, removed in mature form.

Its subcellular location is the cell membrane. This is an uncharacterized protein from Dictyostelium discoideum (Social amoeba).